We begin with the raw amino-acid sequence, 548 residues long: uncharacterized protein (548 aa).

Positions 1–24 (MKKATKLLLSILPISSISFLSVVS) are cleaved as a signal peptide. Cys-25 is lipidated: N-palmitoyl cysteine. Cys-25 carries the S-diacylglycerol cysteine lipid modification. Residues 26-129 (STRNSNAKQP…NNQHADQPNI (104 aa)) form a disordered region. Basic and acidic residues predominate over residues 34-44 (QPDKKPEKPNE). The span at 58–78 (PTNNNNNSNNNSNSNNNKPGS) shows a compositional bias: low complexity. Over residues 83-109 (ENKDPSKSEETPEKPERDPKKPDKQPQ) the composition is skewed to basic and acidic residues. Over residues 110-128 (GDDPNNHQPHNNQHADQPN) the composition is skewed to low complexity.

It belongs to the mycoplasma p72 lipoprotein family.

The protein localises to the cell membrane. This is an uncharacterized protein from Mycoplasma mycoides subsp. mycoides SC (strain CCUG 32753 / NCTC 10114 / PG1).